The following is a 646-amino-acid chain: Threonine--tRNA ligase (646 aa).

The 61-residue stretch at 1–61 (MIKITFPDGS…NEDASVVLYK (61 aa)) folds into the TGS domain. Positions 242–541 (DHRKIGKEMQ…LIEHTAGKFP (300 aa)) are catalytic. Residues Cys337, His388, and His518 each coordinate Zn(2+).

It belongs to the class-II aminoacyl-tRNA synthetase family. Homodimer. The cofactor is Zn(2+).

The protein resides in the cytoplasm. It carries out the reaction tRNA(Thr) + L-threonine + ATP = L-threonyl-tRNA(Thr) + AMP + diphosphate + H(+). Functionally, catalyzes the attachment of threonine to tRNA(Thr) in a two-step reaction: L-threonine is first activated by ATP to form Thr-AMP and then transferred to the acceptor end of tRNA(Thr). Also edits incorrectly charged L-seryl-tRNA(Thr). This Bacteroides fragilis (strain YCH46) protein is Threonine--tRNA ligase.